The sequence spans 355 residues: Uroporphyrinogen decarboxylase (355 aa).

Substrate is bound by residues 27 to 31, Asp77, Tyr154, Thr209, and His327; that span reads RQAGR.

This sequence belongs to the uroporphyrinogen decarboxylase family. In terms of assembly, homodimer.

The protein resides in the cytoplasm. It carries out the reaction uroporphyrinogen III + 4 H(+) = coproporphyrinogen III + 4 CO2. It functions in the pathway porphyrin-containing compound metabolism; protoporphyrin-IX biosynthesis; coproporphyrinogen-III from 5-aminolevulinate: step 4/4. Its function is as follows. Catalyzes the decarboxylation of four acetate groups of uroporphyrinogen-III to yield coproporphyrinogen-III. In Yersinia pestis bv. Antiqua (strain Antiqua), this protein is Uroporphyrinogen decarboxylase.